Consider the following 356-residue polypeptide: Peptide chain release factor 1 (356 aa).

The residue at position 230 (glutamine 230) is an N5-methylglutamine. Over residues 279–289 (ALDSARSEARK) the composition is skewed to basic and acidic residues. The interval 279 to 299 (ALDSARSEARKSQVGSGDRSE) is disordered.

The protein belongs to the prokaryotic/mitochondrial release factor family. Post-translationally, methylated by PrmC. Methylation increases the termination efficiency of RF1.

It is found in the cytoplasm. In terms of biological role, peptide chain release factor 1 directs the termination of translation in response to the peptide chain termination codons UAG and UAA. This Caulobacter vibrioides (strain ATCC 19089 / CIP 103742 / CB 15) (Caulobacter crescentus) protein is Peptide chain release factor 1 (prfA).